We begin with the raw amino-acid sequence, 298 residues long: ATP synthase gamma chain (298 aa).

The protein belongs to the ATPase gamma chain family. As to quaternary structure, F-type ATPases have 2 components, CF(1) - the catalytic core - and CF(0) - the membrane proton channel. CF(1) has five subunits: alpha(3), beta(3), gamma(1), delta(1), epsilon(1). CF(0) has three main subunits: a, b and c.

It is found in the cell inner membrane. Produces ATP from ADP in the presence of a proton gradient across the membrane. The gamma chain is believed to be important in regulating ATPase activity and the flow of protons through the CF(0) complex. The protein is ATP synthase gamma chain of Acidithiobacillus ferridurans.